Here is a 1450-residue protein sequence, read N- to C-terminus: DNA-directed RNA polymerase RPB1 homolog (1450 aa).

It belongs to the RNA polymerase beta' chain family. Part of the viral DNA-directed RNA polymerase that consists of 8 polII-like subunits (RPB1, RPB2, RPB3, RPB5, RPB6, RPB7, RPB9, RPB10), a capping enzyme and a termination factor.

Its subcellular location is the virion. It catalyses the reaction RNA(n) + a ribonucleoside 5'-triphosphate = RNA(n+1) + diphosphate. In terms of biological role, catalytic component of the DNA-directed RNA polymerase (RNAP) that catalyzes the transcription in the cytoplasm of viral DNA into RNA using the four ribonucleoside triphosphates as substrates. Forms the polymerase active center together with RPB2. Part of the core element with the central large cleft, the clamp element that moves to open and close the cleft and the jaws that are thought to grab the incoming DNA template. The chain is DNA-directed RNA polymerase RPB1 homolog from African swine fever virus (isolate Pig/Kenya/KEN-50/1950) (ASFV).